Here is a 382-residue protein sequence, read N- to C-terminus: Pyrimidine monooxygenase RutA (382 aa).

Residues 68 to 69, N134, E143, 159 to 160, and S209 each bind FMN; these read IK and RY.

The protein belongs to the NtaA/SnaA/DszA monooxygenase family. RutA subfamily.

The catalysed reaction is uracil + FMNH2 + NADH + O2 = (Z)-3-ureidoacrylate + FMN + NAD(+) + H2O + H(+). It carries out the reaction thymine + FMNH2 + NADH + O2 = (Z)-2-methylureidoacrylate + FMN + NAD(+) + H2O + H(+). Functionally, catalyzes the pyrimidine ring opening between N-3 and C-4 by an unusual flavin hydroperoxide-catalyzed mechanism, adding oxygen atoms in the process to yield ureidoacrylate peracid, that immediately reacts with FMN forming ureidoacrylate and FMN-N(5)-oxide. The FMN-N(5)-oxide reacts spontaneously with NADH to produce FMN. Requires the flavin reductase RutF to regenerate FMN in vivo. This Shigella flexneri serotype X (strain 2002017) protein is Pyrimidine monooxygenase RutA.